The following is a 158-amino-acid chain: Protein-export protein SecB (158 aa).

It belongs to the SecB family. Homotetramer, a dimer of dimers. One homotetramer interacts with 1 SecA dimer.

It is found in the cytoplasm. In terms of biological role, one of the proteins required for the normal export of preproteins out of the cell cytoplasm. It is a molecular chaperone that binds to a subset of precursor proteins, maintaining them in a translocation-competent state. It also specifically binds to its receptor SecA. In Rhodopseudomonas palustris (strain BisB5), this protein is Protein-export protein SecB.